We begin with the raw amino-acid sequence, 200 residues long: Thymidine kinase (200 aa).

Residues 15–22 and 88–91 each bind ATP; these read GPMYSGKS and DEVQ. Glu-89 acts as the Proton acceptor in catalysis. Positions 145, 148, 177, and 180 each coordinate Zn(2+).

It belongs to the thymidine kinase family. As to quaternary structure, homotetramer.

It localises to the cytoplasm. It catalyses the reaction thymidine + ATP = dTMP + ADP + H(+). This chain is Thymidine kinase, found in Mycoplasma mobile (strain ATCC 43663 / 163K / NCTC 11711) (Mesomycoplasma mobile).